Here is a 193-residue protein sequence, read N- to C-terminus: Ion-translocating oxidoreductase complex subunit A (193 aa).

Transmembrane regions (helical) follow at residues 5 to 25 (ALLFVSILLVNNFVLVKFLGL), 39 to 59 (IGMGMATTFVMTLGSMFSWLI), 62 to 82 (FILVPLDILYLRTMAFILVLA), 102 to 122 (LLGIFLPLITTNCAVLGVVLL), 134 to 154 (TIYGFGGAAGFSLVMVLFAAI), and 171 to 191 (SIALITAGLMSLAFMGFTGLV).

The protein belongs to the NqrDE/RnfAE family. The complex is composed of six subunits: RnfA, RnfB, RnfC, RnfD, RnfE and RnfG.

The protein resides in the cell inner membrane. Functionally, part of a membrane-bound complex that couples electron transfer with translocation of ions across the membrane. In Pectobacterium atrosepticum (strain SCRI 1043 / ATCC BAA-672) (Erwinia carotovora subsp. atroseptica), this protein is Ion-translocating oxidoreductase complex subunit A.